The sequence spans 502 residues: Probable cytochrome P450 514A4 (502 aa).

Residues 4–24 (IFTIILTITILVLSLILKDLL) form a helical membrane-spanning segment. Cysteine 448 is a binding site for heme.

It belongs to the cytochrome P450 family. Heme is required as a cofactor.

It is found in the membrane. The polypeptide is Probable cytochrome P450 514A4 (cyp514A4) (Dictyostelium discoideum (Social amoeba)).